The following is a 468-amino-acid chain: Tubulin gamma chain (468 aa).

Residue 142-148 (AGGTGSG) participates in GTP binding.

This sequence belongs to the tubulin family.

Its subcellular location is the cytoplasm. It is found in the cytoskeleton. The protein localises to the microtubule organizing center. In terms of biological role, tubulin is the major constituent of microtubules. The gamma chain is found at microtubule organizing centers (MTOC) such as the spindle poles, suggesting that it is involved in the minus-end nucleation of microtubule assembly. This is Tubulin gamma chain (TUBG) from Chlamydomonas reinhardtii (Chlamydomonas smithii).